A 481-amino-acid chain; its full sequence is tRNA-guanine(15) transglycosylase (481 aa).

D87 (nucleophile) is an active-site residue. The substrate site is built by D122 and A191. Zn(2+)-binding residues include C273, C275, and C278.

It belongs to the archaeosine tRNA-ribosyltransferase family. It depends on Zn(2+) as a cofactor.

The enzyme catalyses guanosine(15) in tRNA + 7-cyano-7-deazaguanine = 7-cyano-7-carbaguanosine(15) in tRNA + guanine. The protein operates within tRNA modification; archaeosine-tRNA biosynthesis. Functionally, exchanges the guanine residue with 7-cyano-7-deazaguanine (preQ0) at position 15 in the dihydrouridine loop (D-loop) of archaeal tRNAs. This Archaeoglobus fulgidus (strain ATCC 49558 / DSM 4304 / JCM 9628 / NBRC 100126 / VC-16) protein is tRNA-guanine(15) transglycosylase.